Reading from the N-terminus, the 562-residue chain is Long-chain-fatty-acid--CoA ligase (562 aa).

Belongs to the ATP-dependent AMP-binding enzyme family. Requires Mg(2+) as cofactor.

It localises to the membrane. The catalysed reaction is a long-chain fatty acid + ATP + CoA = a long-chain fatty acyl-CoA + AMP + diphosphate. Its pathway is lipid metabolism; fatty acid beta-oxidation. Its function is as follows. Catalyzes the esterification, concomitant with transport, of exogenous long-chain fatty acids into metabolically active CoA thioesters for subsequent degradation or incorporation into phospholipids. This Haemophilus influenzae (strain ATCC 51907 / DSM 11121 / KW20 / Rd) protein is Long-chain-fatty-acid--CoA ligase (fadD).